The following is a 169-amino-acid chain: Nucleoside diphosphate kinase 3 (169 aa).

ADP contacts are provided by Lys-29, Arg-105, Thr-111, Arg-122, Val-129, and Asn-132. Residue His-135 is the Pros-phosphohistidine intermediate of the active site.

This sequence belongs to the NDK family. In terms of assembly, homohexamer. Mg(2+) is required as a cofactor.

Its subcellular location is the mitochondrion outer membrane. The protein resides in the cytoplasm. It is found in the cytoskeleton. The protein localises to the cilium basal body. It carries out the reaction a 2'-deoxyribonucleoside 5'-diphosphate + ATP = a 2'-deoxyribonucleoside 5'-triphosphate + ADP. It catalyses the reaction a ribonucleoside 5'-diphosphate + ATP = a ribonucleoside 5'-triphosphate + ADP. Catalyzes the phosphorylation of ribonucleosides and deoxyribonucleoside diphosphates, other than ATP, into the corresponding triphosphates with ATP as the major phosphate donor. The ATP gamma phosphate is transferred to the nucleoside diphosphate beta phosphate via a ping-pong mechanism, using a phosphorylated active-site intermediate. Through the catalyzed exchange of gamma-phosphate between di- and triphosphonucleosides participates in regulation of intracellular nucleotide homeostasis. Required for ciliary function during renal development. In terms of biological role, independently of its kinase activity, facilitates mitochondrial tethering prior to membrane fusion through its direct membrane-binding and hexamerization. Implicated in repair of both single- and double-stranded breaks in DNA, independently of its kinase activity. This Danio rerio (Zebrafish) protein is Nucleoside diphosphate kinase 3.